A 926-amino-acid polypeptide reads, in one-letter code: Protein translocase subunit SecA (926 aa).

ATP-binding positions include Gln87, 105–109 (GEGKT), and Asp512. The Zn(2+) site is built by Cys911, Cys913, Cys922, and His923.

It belongs to the SecA family. In terms of assembly, monomer and homodimer. Part of the essential Sec protein translocation apparatus which comprises SecA, SecYEG and auxiliary proteins SecDF-YajC and YidC. It depends on Zn(2+) as a cofactor.

It is found in the cell inner membrane. The protein localises to the cytoplasm. It catalyses the reaction ATP + H2O + cellular proteinSide 1 = ADP + phosphate + cellular proteinSide 2.. In terms of biological role, part of the Sec protein translocase complex. Interacts with the SecYEG preprotein conducting channel. Has a central role in coupling the hydrolysis of ATP to the transfer of proteins into and across the cell membrane, serving both as a receptor for the preprotein-SecB complex and as an ATP-driven molecular motor driving the stepwise translocation of polypeptide chains across the membrane. The sequence is that of Protein translocase subunit SecA from Psychrobacter cryohalolentis (strain ATCC BAA-1226 / DSM 17306 / VKM B-2378 / K5).